Here is a 119-residue protein sequence, read N- to C-terminus: Ribosome-binding factor A (119 aa).

This sequence belongs to the RbfA family. In terms of assembly, monomer. Binds 30S ribosomal subunits, but not 50S ribosomal subunits or 70S ribosomes.

The protein resides in the cytoplasm. Its function is as follows. One of several proteins that assist in the late maturation steps of the functional core of the 30S ribosomal subunit. Associates with free 30S ribosomal subunits (but not with 30S subunits that are part of 70S ribosomes or polysomes). Required for efficient processing of 16S rRNA. May interact with the 5'-terminal helix region of 16S rRNA. The chain is Ribosome-binding factor A from Geobacter sp. (strain M21).